A 468-amino-acid polypeptide reads, in one-letter code: Glutamate--tRNA ligase 2 (468 aa).

A 'HIGH' region motif is present at residues 11–21 (PSPTGFLHIGG). Positions 239–243 (KLSKR) match the 'KMSKS' region motif. Position 242 (Lys242) interacts with ATP.

This sequence belongs to the class-I aminoacyl-tRNA synthetase family. Glutamate--tRNA ligase type 1 subfamily. In terms of assembly, monomer.

The protein localises to the cytoplasm. It carries out the reaction tRNA(Glu) + L-glutamate + ATP = L-glutamyl-tRNA(Glu) + AMP + diphosphate. Its function is as follows. Catalyzes the attachment of glutamate to tRNA(Glu) in a two-step reaction: glutamate is first activated by ATP to form Glu-AMP and then transferred to the acceptor end of tRNA(Glu). The chain is Glutamate--tRNA ligase 2 from Ruegeria pomeroyi (strain ATCC 700808 / DSM 15171 / DSS-3) (Silicibacter pomeroyi).